We begin with the raw amino-acid sequence, 355 residues long: C-X-C chemokine receptor type 1 (355 aa).

Over 1 to 40 the chain is Extracellular; sequence MEVNVWNMTDLWTWFEDEFANATGMPPVEKDYSPCLVVTQ. N7 and N21 each carry an N-linked (GlcNAc...) asparagine glycan. A helical membrane pass occupies residues 41–67; sequence TLNKYVVVVIYALVFLLSLLGNSLVML. Topologically, residues 68-73 are cytoplasmic; it reads VILYSR. The helical transmembrane segment at 74–92 threads the bilayer; it reads SNRSVTDVYLLNLAMADLL. Residues 93–114 lie on the Extracellular side of the membrane; sequence FALTMPIWAVSKEKGWIFGTPL. A helical transmembrane segment spans residues 115–138; the sequence is CKVVSLVKEVNFYSGILLLACISV. A disulfide bridge links C115 with C192. The Cytoplasmic segment spans residues 139 to 159; sequence DRYLAIVHATRTLTQKRHLVK. The chain crosses the membrane as a helical span at residues 160 to 184; the sequence is FICLGIWALSLILSLPFFLFRQVFS. The Extracellular segment spans residues 185-204; it reads PNNSSPVCYEDLGHNTAKWR. A helical membrane pass occupies residues 205-232; sequence MVLRILPHTFGFILPLLVMLFCYGFTLR. Over 233 to 247 the chain is Cytoplasmic; sequence TLFQAHMGQKHRAMR. Residues 248 to 270 form a helical membrane-spanning segment; the sequence is VIFAVVLIFLLCWLPYNLVLLAD. Residues 271-290 are Extracellular-facing; it reads TLMRTHVIQETCQRRNDIDR. The chain crosses the membrane as a helical span at residues 291 to 313; the sequence is ALDATEILGFLHSCLNPIIYAFI. At 314–355 the chain is on the cytoplasmic side; it reads GQNFRNGFLKMLAARGLISKEFLTRHRVTSYTSSSTNVPSNL.

This sequence belongs to the G-protein coupled receptor 1 family. As to quaternary structure, interacts with IL8. Interacts with GNAI2. As to expression, neutrophils.

It localises to the cell membrane. Receptor to interleukin-8, which is a powerful neutrophils chemotactic factor. Binding of IL-8 to the receptor causes activation of neutrophils. This response is mediated via a G-protein that activates a phosphatidylinositol-calcium second messenger system. This Oryctolagus cuniculus (Rabbit) protein is C-X-C chemokine receptor type 1 (CXCR1).